A 63-amino-acid chain; its full sequence is Large ribosomal subunit protein uL29 (63 aa).

It belongs to the universal ribosomal protein uL29 family.

This chain is Large ribosomal subunit protein uL29, found in Yersinia enterocolitica serotype O:8 / biotype 1B (strain NCTC 13174 / 8081).